Here is a 187-residue protein sequence, read N- to C-terminus: Potassium-transporting ATPase KdpC subunit (187 aa).

A helical membrane pass occupies residues 11–31 (LILLMTVVTGALYPLAVTGIA).

This sequence belongs to the KdpC family. In terms of assembly, the system is composed of three essential subunits: KdpA, KdpB and KdpC.

Its subcellular location is the cell inner membrane. Part of the high-affinity ATP-driven potassium transport (or Kdp) system, which catalyzes the hydrolysis of ATP coupled with the electrogenic transport of potassium into the cytoplasm. This subunit acts as a catalytic chaperone that increases the ATP-binding affinity of the ATP-hydrolyzing subunit KdpB by the formation of a transient KdpB/KdpC/ATP ternary complex. In Pseudomonas entomophila (strain L48), this protein is Potassium-transporting ATPase KdpC subunit.